The chain runs to 207 residues: Protein LURP1 (207 aa).

It belongs to the LOR family. Limited to discrete pathogen infection sites in leaves.

Functionally, involved in basal defense against virulent oomycetes. Might be related to the phospholipid scramblase and tubby-like superfamily of membrane tethered transcription factors. In Arabidopsis thaliana (Mouse-ear cress), this protein is Protein LURP1 (LURP1).